A 527-amino-acid chain; its full sequence is Rhamnogalacturonate lyase A (527 aa).

An N-terminal signal peptide occupies residues 1–19; sequence MLKASLLSFVAFTAQVAHA. Disulfide bonds link cysteine 49–cysteine 92 and cysteine 183–cysteine 192. Asparagine 350 carries N-linked (GlcNAc...) asparagine glycosylation.

The protein belongs to the polysaccharide lyase 4 family.

It is found in the secreted. The enzyme catalyses Endotype eliminative cleavage of L-alpha-rhamnopyranosyl-(1-&gt;4)-alpha-D-galactopyranosyluronic acid bonds of rhamnogalacturonan I domains in ramified hairy regions of pectin leaving L-rhamnopyranose at the reducing end and 4-deoxy-4,5-unsaturated D-galactopyranosyluronic acid at the non-reducing end.. Functionally, pectinolytic enzyme that has a positive effect in the apple hot-mash liquefaction process. This endolyase hydrolyzes the alpha-L-rhamnopyranosyl-(1,4)-alpha-D-galacturonopyranosyl glycosidic linkage by beta-elimination, thereby generating oligosaccharides terminating at the non-reducing end with a hex-4-enopyranosyluronic acid residue. This is Rhamnogalacturonate lyase A (rglA) from Aspergillus aculeatus.